Reading from the N-terminus, the 185-residue chain is Lysozyme g (185 aa).

2 disulfides stabilise this stretch: C4–C60 and C18–C29. Residue E73 is part of the active site.

The protein belongs to the glycosyl hydrolase 23 family.

Its subcellular location is the secreted. The enzyme catalyses Hydrolysis of (1-&gt;4)-beta-linkages between N-acetylmuramic acid and N-acetyl-D-glucosamine residues in a peptidoglycan and between N-acetyl-D-glucosamine residues in chitodextrins.. The chain is Lysozyme g from Cygnus atratus (Black swan).